Here is a 264-residue protein sequence, read N- to C-terminus: Thymidylate synthase (264 aa).

Position 21 (Arg21) interacts with dUMP. A (6R)-5,10-methylene-5,6,7,8-tetrahydrofolate-binding site is contributed by His51. DUMP is bound at residue 126 to 127 (RR). Cys146 serves as the catalytic Nucleophile. Residues 166–169 (RSAD), Asn177, and 207–209 (HLY) each bind dUMP. Asp169 is a (6R)-5,10-methylene-5,6,7,8-tetrahydrofolate binding site. Ala263 lines the (6R)-5,10-methylene-5,6,7,8-tetrahydrofolate pocket.

This sequence belongs to the thymidylate synthase family. Bacterial-type ThyA subfamily. As to quaternary structure, homodimer.

The protein resides in the cytoplasm. It catalyses the reaction dUMP + (6R)-5,10-methylene-5,6,7,8-tetrahydrofolate = 7,8-dihydrofolate + dTMP. It functions in the pathway pyrimidine metabolism; dTTP biosynthesis. In terms of biological role, catalyzes the reductive methylation of 2'-deoxyuridine-5'-monophosphate (dUMP) to 2'-deoxythymidine-5'-monophosphate (dTMP) while utilizing 5,10-methylenetetrahydrofolate (mTHF) as the methyl donor and reductant in the reaction, yielding dihydrofolate (DHF) as a by-product. This enzymatic reaction provides an intracellular de novo source of dTMP, an essential precursor for DNA biosynthesis. This Bdellovibrio bacteriovorus (strain ATCC 15356 / DSM 50701 / NCIMB 9529 / HD100) protein is Thymidylate synthase.